We begin with the raw amino-acid sequence, 126 residues long: SFESIIPFIVTAPLGRLTFYVEHYPWIDFKSHMKEILDFLEGSLVSDVHSHKLETSVLDNSTSSSYNPVSGMLFVNDLLTMTVVNFFGCNSRLNSYHRFDMTKLDINTFLKALADAFKKIANYLEV.

The protein belongs to the poxviridae DNA-directed RNA polymerase 35 kDa subunit family. As to quaternary structure, the DNA-dependent RNA polymerase used for intermediate and late genes expression consists of eight subunits 147 kDa, 133 kDa, 35 kDa, 30 kDa, 22 kDa, 19 kDa, 18 kDa and 7 kDa totalling more than 500 kDa in mass. The same holoenzyme, with the addition of the transcription-specificity factor RAP94, is used for early gene expression.

Its subcellular location is the virion. The enzyme catalyses RNA(n) + a ribonucleoside 5'-triphosphate = RNA(n+1) + diphosphate. In terms of biological role, part of the DNA-dependent RNA polymerase which catalyzes the transcription of viral DNA into RNA using the four ribonucleoside triphosphates as substrates. Responsible for the transcription of early, intermediate and late genes. DNA-dependent RNA polymerase associates with the early transcription factor (ETF) thereby allowing the early genes transcription. Late transcription, and probably also intermediate transcription, require newly synthesized RNA polymerase. The polypeptide is DNA-directed RNA polymerase 35 kDa subunit (RPO35) (Ovis aries (Sheep)).